Consider the following 96-residue polypeptide: Ferredoxin-1 (96 aa).

A 2Fe-2S ferredoxin-type domain is found at 1-95 (MKVIINGKEF…DCDEIVIESE (95 aa)). Positions 34, 39, 42, and 78 each coordinate [2Fe-2S] cluster. Cysteines 52 and 87 form a disulfide.

Belongs to the 2Fe2S plant-type ferredoxin family. Requires [2Fe-2S] cluster as cofactor.

In terms of biological role, ferredoxins are iron-sulfur proteins that transfer electrons in a wide variety of metabolic reactions. In Aquifex aeolicus (strain VF5), this protein is Ferredoxin-1 (fdx1).